We begin with the raw amino-acid sequence, 324 residues long: Gamma-soluble NSF attachment protein (324 aa).

Over residues 285-298 the composition is skewed to polar residues; that stretch reads NPTINSTAPQQQYS. Positions 285–324 are disordered; that stretch reads NPTINSTAPQQQYSNTTTTTTNNTNNNNPTSQQDDDEDVL. The segment covering 299-312 has biased composition (low complexity); it reads NTTTTTTNNTNNNN.

This sequence belongs to the SNAP family. Interacts with nsfA and probably SNARE proteins.

The protein localises to the cytoplasmic vesicle membrane. Its function is as follows. May be required for vesicular transport between the endoplasmic reticulum and the Golgi apparatus. Involved in vesicle fusion with nsfA and probably SNARE proteins. The polypeptide is Gamma-soluble NSF attachment protein (snpC) (Dictyostelium discoideum (Social amoeba)).